The chain runs to 624 residues: MSKVIGIDLGTTNSAVAVLEGNQPKIITNPEGNRTTPSVVAFKDGEIQVGEVAKRQAITNPDTIVSIKRHMGEANYKVKVGDKEYTPQEISAMILQYIKKFSEDYLGEPVKDAVITVPAYFNDSQRQATKDAGKIAGLNVQRIINEPTASALAYGLDKGDKDEKILVYDLGGGTFDVSILQLGDGVFEVLSTNGDTHLGGDDFDNKIIDWLVAEFKKDNNIDLSKDKMAMQRLKDAAEKAKKDLSGVTQTQISLPFISAGPNGPLHLERTLTRAQFDEMTADLVAKTKIPVENALKDAKLTNADIDKVILNGGSTRTPAVQEAVKQWTGKDPDHSINPDEAVALGAAIQGGVISGDVKDVVLLDVTPLSLGIETMGGVFTKLIDRNTTIPTSKSQVFSTAADSQPAVDIHVLQGERPMAADDKTLGRFELTDIPPAPRGVPQIEVKFDIDKNGIVQVSAKDLGTGKSQNITIKSSSGLSDEEIERMKKEAEENADADEKRKEEVDLKNDVDQLLFQTDKTLKDVDGKVPEEDIKKVKDAQEALKKAQQENNLDDMKQKRDDLSKLVQDMTVKLYENAQKNQQAQGGPASGAATDAGAAQGSDDKKSDDDTINGDYKDVSDDDKK.

Thr-174 is modified (phosphothreonine; by autocatalysis). Disordered stretches follow at residues 544-563 (KKAQQENNLDDMKQKRDDLS) and 576-624 (NAQK…DDKK). A compositionally biased stretch (low complexity) spans 581 to 600 (QQAQGGPASGAATDAGAAQG). Basic and acidic residues predominate over residues 601-624 (SDDKKSDDDTINGDYKDVSDDDKK).

It belongs to the heat shock protein 70 family.

In terms of biological role, acts as a chaperone. The protein is Chaperone protein DnaK of Lacticaseibacillus casei (strain BL23) (Lactobacillus casei).